Here is a 469-residue protein sequence, read N- to C-terminus: Glutamate--tRNA ligase (469 aa).

Residues 11 to 21 carry the 'HIGH' region motif; the sequence is PSPTGFIHLGN. Positions 118–131 are enriched in basic and acidic residues; sequence GEKPRYDGTWRPEP. The segment at 118–138 is disordered; that stretch reads GEKPRYDGTWRPEPGKVLPEP. The short motif at 243–247 is the 'KMSKS' region element; that stretch reads KMSKR. Lysine 246 contacts ATP.

Belongs to the class-I aminoacyl-tRNA synthetase family. Glutamate--tRNA ligase type 1 subfamily. Monomer.

It is found in the cytoplasm. The catalysed reaction is tRNA(Glu) + L-glutamate + ATP = L-glutamyl-tRNA(Glu) + AMP + diphosphate. Its function is as follows. Catalyzes the attachment of glutamate to tRNA(Glu) in a two-step reaction: glutamate is first activated by ATP to form Glu-AMP and then transferred to the acceptor end of tRNA(Glu). The sequence is that of Glutamate--tRNA ligase from Burkholderia thailandensis (strain ATCC 700388 / DSM 13276 / CCUG 48851 / CIP 106301 / E264).